Reading from the N-terminus, the 2327-residue chain is Voltage-dependent N-type calcium channel subunit alpha-1B (2327 aa).

Positions 1–37 are disordered; sequence MVRFGDELGGRYGGTGGGERARGGGAGGAGGPGQGGL. At 1–90 the chain is on the cytoplasmic side; the sequence is MVRFGDELGG…DNVVRKYAKR (90 aa). The segment covering 10–37 has biased composition (gly residues); sequence GRYGGTGGGERARGGGAGGAGGPGQGGL. Omega-N-methylarginine is present on Arg-22. An I repeat occupies 82 to 359; that stretch reads NVVRKYAKRI…LVLGVLSGEF (278 aa). The chain crosses the membrane as a helical span at residues 91–114; that stretch reads ITEWPPFEYMILATIIANCIVLAL. Over 115–131 the chain is Extracellular; the sequence is EQHLPDGDKTPMSERLD. Residues 132 to 152 traverse the membrane as a helical segment; it reads DTEPYFIGIFCFEAGIKIIAL. The Cytoplasmic segment spans residues 153–163; that stretch reads GFVFHKGSYLR. Residues 164 to 182 form a helical membrane-spanning segment; that stretch reads NGWNVMDFVVVLTGILATA. The Extracellular segment spans residues 183 to 187; that stretch reads GTDFD. The chain crosses the membrane as a helical span at residues 188–211; it reads LRTLRAVRVLRPLKLVSGIPSLQV. Topologically, residues 212–221 are cytoplasmic; sequence VLKSIMKAMV. The helical transmembrane segment at 222 to 244 threads the bilayer; that stretch reads PLLQIGLLLFFAILMFAIIGLEF. Residues 245-331 lie on the Extracellular side of the membrane; sequence YMGKFHKACF…NTNDAAGNTW (87 aa). N-linked (GlcNAc...) asparagine glycosylation occurs at Asn-256. The helical transmembrane segment at 332 to 356 threads the bilayer; the sequence is NWLYFIPLIIIGSFFMLNLVLGVLS. Topologically, residues 357–482 are cytoplasmic; the sequence is GEFAKERERV…FFIRRMVKAQ (126 aa). A binding to the beta subunit region spans residues 379–396; it reads QQIERELNGYLEWIFKAE. Ser-411 is modified (phosphoserine). Position 451-458 (451-458) interacts with ATP; sequence ASLKSGKT. Residues 468–712 form an II repeat; that stretch reads EKMFRFFIRR…VFLAIAVDNL (245 aa). The chain crosses the membrane as a helical span at residues 483-501; sequence SFYWVVLCVVALNTLCVAM. At 502–511 the chain is on the extracellular side; it reads VHYNQPQRLT. A helical transmembrane segment spans residues 512–534; the sequence is TALYFAEFVFLGLFLTEMSLKMY. Over 535-544 the chain is Cytoplasmic; sequence GLGPRSYFRS. Ser-544 serves as a coordination point for a 1,2-diacyl-sn-glycero-3-phospho-(1D-myo-inositol-4,5-bisphosphate). A helical transmembrane segment spans residues 545–566; it reads SFNCFDFGVIVGSIFEVVWAAI. Residues 567–573 lie on the Extracellular side of the membrane; it reads KPGTSFG. A helical transmembrane segment spans residues 574 to 586; the sequence is ISVLRALRLLRIF. Residues Arg-584 and Lys-587 each coordinate a 1,2-diacyl-sn-glycero-3-phospho-(1D-myo-inositol-4,5-bisphosphate). Residues 587-604 are Cytoplasmic-facing; it reads KVTKYWNSLRNLVVSLLN. Residues 605–630 traverse the membrane as a helical segment; it reads SMKSIISLLFLLFLFIVVFALLGMQL. Residues 631–682 are Extracellular-facing; that stretch reads FGGQFNFQDETPTTNFDTFPAAILTVFQILTGEDWNAVMYHGIESQGGVSKG. Residues 683–709 traverse the membrane as a helical segment; it reads MFSSFYFIVLTLFGNYTLLNVFLAIAV. Topologically, residues 710–1140 are cytoplasmic; that stretch reads DNLANAQELT…FCHYIVTMRY (431 aa). 3 positions are modified to phosphoserine: Ser-745, Ser-748, and Ser-783. 2 disordered regions span residues 802–1015 and 1042–1066; these read TRHV…KEPH and EQPEDADNQRNVTRMGSQPSDPSTT. 5 stretches are compositionally biased toward basic and acidic residues: residues 805–826, 869–885, 914–924, 961–972, and 988–1015; these read VRPDMKTHMDRPLVVEPGRDGL, EQDRTESTETGAREERA, GSPEEATEREP, GPREAENNEEPT, and PEREAAEKESNAVEGDKETRNHQPKEPH. Residues 1050-1066 are compositionally biased toward polar residues; sequence QRNVTRMGSQPSDPSTT. Ser-1058 is modified (phosphoserine). One copy of the III repeat lies at 1126–1412; the sequence is NLLRRFCHYI…IFVALIIITF (287 aa). Residues 1141-1159 traverse the membrane as a helical segment; it reads FEMVILVVIALSSIALAAE. The Extracellular portion of the chain corresponds to 1160 to 1167; that stretch reads DPVRTDSF. Residues 1168–1192 form a helical membrane-spanning segment; it reads RNNALKYMDYIFTGVFTFEMVIKMI. Residues 1193–1206 are Cytoplasmic-facing; sequence DLGLLLHPGAYFRD. Residues 1207–1231 traverse the membrane as a helical segment; the sequence is LWNILDFIVVSGALVAFAFSSFMGG. Over 1232–1237 the chain is Extracellular; that stretch reads SKGKDI. The helical transmembrane segment at 1238–1258 threads the bilayer; the sequence is NTIKSLRVLRVLRPLKTIKRL. Topologically, residues 1259–1276 are cytoplasmic; that stretch reads PKLKAVFDCVVNSLKNVL. Residues 1277–1296 form a helical membrane-spanning segment; the sequence is NILIVYMLFMFIFAVIAVQL. Residues 1297-1383 are Extracellular-facing; that stretch reads FKGKFFYCTD…EQGPSPGFRM (87 aa). Residues 1384-1409 form a helical membrane-spanning segment; that stretch reads ELSIFYVVYFVVFPFFFVNIFVALII. Residues 1410-1464 lie on the Cytoplasmic side of the membrane; it reads ITFQEQGDKVMSECSLEKNERACIDFAISAKPLTRYMPQNKQSFQYKTWTFVVSP. An IV repeat occupies 1449–1702; it reads NKQSFQYKTW…LFVAVIMDNF (254 aa). The chain crosses the membrane as a helical span at residues 1465–1483; the sequence is PFEYFIMAMIALNTVVLMM. Residues 1484 to 1491 are Extracellular-facing; the sequence is KFYDAPYE. A helical transmembrane segment spans residues 1492–1516; it reads YELMLKCLNIVFTSMFSMECILKII. Residues 1517-1526 lie on the Cytoplasmic side of the membrane; it reads AFGVLNYFRD. A helical transmembrane segment spans residues 1527–1548; it reads AWNVFDFVTVLGSITDILVTEI. The Extracellular segment spans residues 1549–1554; it reads ANNFIN. N-linked (GlcNAc...) asparagine glycosylation occurs at Asn-1554. The chain crosses the membrane as a helical span at residues 1555-1573; the sequence is LSFLRLFRAARLIKLLRQG. Topologically, residues 1574 to 1592 are cytoplasmic; that stretch reads YTIRILLWTFVQSFKALPY. A helical transmembrane segment spans residues 1593-1612; it reads VCLLIAMLFFIYAIIGMQVF. Over 1613–1674 the chain is Extracellular; sequence GNIALDDDTS…ANASECGSDF (62 aa). Asn-1666 carries an N-linked (GlcNAc...) asparagine glycan. The helical transmembrane segment at 1675–1698 threads the bilayer; that stretch reads AYFYFVSFIFLCSFLMLNLFVAVI. At 1699–2327 the chain is on the cytoplasmic side; sequence MDNFEYLTRD…YHHPDQDHWC (629 aa). Positions 1715 to 1750 constitute an EF-hand domain; the sequence is HHLDEFIRVWAEYDPAACGRISYNDMFEMLKHMSPP. Asp-1728, Arg-1734, and Asp-1739 together coordinate Ca(2+). The segment at 1972-2193 is disordered; that stretch reads TLRGPDGEPQ…TPRPSITYKT (222 aa). A compositionally biased stretch (basic residues) spans 2039–2053; the sequence is SHHHHHRCHRRRDKK. Ser-2056 is subject to Phosphoserine. Over residues 2088 to 2104 the composition is skewed to basic and acidic residues; it reads CRRDRKQERGRSQERRQ. Composition is skewed to polar residues over residues 2131-2141 and 2152-2168; these read PSLSSHPTSPT and GSGSVNGSPLMSTSGAS. Phosphoserine is present on residues Ser-2212, Ser-2221, and Ser-2244. Disordered regions lie at residues 2230 to 2249 and 2273 to 2292; these read EPLSQPLAPGSRIGSDPYLG and ATNSGRSSRTSYVSSLTSQS. Positions 2276-2292 are enriched in low complexity; the sequence is SGRSSRTSYVSSLTSQS.

It belongs to the calcium channel alpha-1 subunit (TC 1.A.1.11) family. CACNA1B subfamily. In terms of assembly, multisubunit complex consisting of alpha-1, alpha-2, beta and delta subunits in a 1:1:1:1 ratio. The channel activity is directed by the pore-forming and voltage-sensitive alpha-1 subunit. In many cases, this subunit is sufficient to generate voltage-sensitive calcium channel activity. The auxiliary subunits beta and alpha-2/delta linked by a disulfide bridge regulate the channel activity. Interacts with RIMS1. Interacts with FMR1 (via C-terminus); this interaction induces a decrease in the number of presynaptic functional CACNA1B channels at the cell surface. Phosphorylated in vitro by CaM-kinase II, PKA, PKC and CGPK. Widespread expression throughout the brain. Highest levels in pyramidal cell layers C1, C2 and C3 of the hippocampus, in the dentate gyrus, in the cortex layers 2 et 4, in the subiculum and the habenula.

The protein resides in the membrane. The enzyme catalyses Ca(2+)(in) = Ca(2+)(out). Is specifically blocked by omega-conotoxin GVIA. Is specifically blocked by omega-conotoxin MVIIA (ziconotide). Is insensitive to dihydropyridines (DHP). Voltage-sensitive calcium channels (VSCC) mediate the entry of calcium ions into excitable cells and are also involved in a variety of calcium-dependent processes, including muscle contraction, hormone or neurotransmitter release, gene expression, cell motility, cell division and cell death. This alpha-1B subunit gives rise to N-type calcium currents. N-type calcium channels belong to the 'high-voltage activated' (HVA) group. They are involved in pain signaling. Calcium channels containing alpha-1B subunit may play a role in directed migration of immature neurons. Mediates Ca(2+) release probability at hippocampal neuronal soma and synaptic terminals. This is Voltage-dependent N-type calcium channel subunit alpha-1B (Cacna1b) from Mus musculus (Mouse).